The following is a 355-amino-acid chain: Type II methyltransferase M.MthZI (355 aa).

This sequence belongs to the N(4)/N(6)-methyltransferase family. N(4) subfamily.

The catalysed reaction is a 2'-deoxycytidine in DNA + S-adenosyl-L-methionine = an N(4)-methyl-2'-deoxycytidine in DNA + S-adenosyl-L-homocysteine + H(+). In terms of biological role, a beta subtype methylase that recognizes the double-stranded sequence 5'-CTAG-3', methylates C-1 on both strands, and protects the DNA from cleavage by the MthZI endonuclease. This is Type II methyltransferase M.MthZI from Methanothermobacter thermautotrophicus (Methanobacterium thermoformicicum).